A 246-amino-acid chain; its full sequence is Thiamine import ATP-binding protein ThiQ (246 aa).

The ABC transporter domain maps to 10-239 (VKLDALAFAY…QGPPAFARYL (230 aa)). ATP is bound at residue 41 to 48 (GPSGSGKS).

This sequence belongs to the ABC transporter superfamily. Thiamine importer (TC 3.A.1.19.1) family. In terms of assembly, the complex is composed of two ATP-binding proteins (ThiQ), two transmembrane proteins (ThiP) and a solute-binding protein (ThiB).

Its subcellular location is the cell inner membrane. The enzyme catalyses thiamine(out) + ATP + H2O = thiamine(in) + ADP + phosphate + H(+). In terms of biological role, part of the ABC transporter complex ThiBPQ involved in thiamine import. Responsible for energy coupling to the transport system. This chain is Thiamine import ATP-binding protein ThiQ, found in Chelativorans sp. (strain BNC1).